Consider the following 262-residue polypeptide: MSSIHSTAIVDPGAELDSSVTVGPYAVIGPKVRIGAGTSVGPHCVIEGRTTIGRDNRIFQFASLGAIPQDKKYAGEDTCLEIGDRNTIREFCTFNLGVPGAGGVTRVGDDNWIMAYCHIAHDCLVGNHTTLSNNTTLAGHVELGDWVTVGGLVGIHQFVKIGAHAMVGFASAVSQDVPPFMLVDGNPMGVRGFNIVGLKRRGFSADRLAAVKQMHRLLYRQGLTLEAAAKAIEELAAEHPEAAGDITLLRDFIVSSTRGIAR.

It belongs to the transferase hexapeptide repeat family. LpxA subfamily. Homotrimer.

Its subcellular location is the cytoplasm. The enzyme catalyses a (3R)-hydroxyacyl-[ACP] + UDP-N-acetyl-alpha-D-glucosamine = a UDP-3-O-[(3R)-3-hydroxyacyl]-N-acetyl-alpha-D-glucosamine + holo-[ACP]. It functions in the pathway glycolipid biosynthesis; lipid IV(A) biosynthesis; lipid IV(A) from (3R)-3-hydroxytetradecanoyl-[acyl-carrier-protein] and UDP-N-acetyl-alpha-D-glucosamine: step 1/6. Functionally, involved in the biosynthesis of lipid A, a phosphorylated glycolipid that anchors the lipopolysaccharide to the outer membrane of the cell. The sequence is that of Acyl-[acyl-carrier-protein]--UDP-N-acetylglucosamine O-acyltransferase from Paracidovorax citrulli (strain AAC00-1) (Acidovorax citrulli).